Reading from the N-terminus, the 335-residue chain is Homeobox protein DBX1 (335 aa).

Disordered stretches follow at residues 58 to 102 (IPAA…LSPA) and 240 to 335 (KERE…ITVS). The span at 83–95 (GSPGSGSRRGSSP) shows a compositional bias: low complexity. A DNA-binding region (homeobox) is located at residues 181–240 (GMLRRAVFSDVQRKALEKTFQKQKYISKPDRKKLASKLGLKDSQVKIWFQNRRMKWRNSK). Residues 299-317 (GPLPASPAHSSSPGKPSDF) show a composition bias toward low complexity. The segment covering 318 to 335 (SDSDEDEEGEEDEEITVS) has biased composition (acidic residues).

Belongs to the H2.0 homeobox family.

Its subcellular location is the nucleus. Its function is as follows. Could have a role in patterning the central nervous system during embryogenesis. Has a key role in regulating the distinct phenotypic features that distinguish two major classes of ventral interneurons, V0 and V1 neurons. Regulates the transcription factor profile, neurotransmitter phenotype, intraspinal migratory path and axonal trajectory of V0 neurons, features that differentiate them from an adjacent set of V1 neurons. The protein is Homeobox protein DBX1 (Dbx1) of Mus musculus (Mouse).